The primary structure comprises 315 residues: Petrobactin import system permease protein YclO (315 aa).

9 helical membrane passes run 7–27, 40–60, 76–96, 100–120, 128–148, 172–192, 223–243, 262–282, and 288–308; these read IALL…YDLG, VAAI…FQTI, LYML…MVIM, INFI…YQIM, IFFL…LSSF, INTD…VYVW, LIVV…IMFL, YLIA…QFVV, and FSTT…IYLL.

It belongs to the binding-protein-dependent transport system permease family. FecCD subfamily. In terms of assembly, the complex is composed of two ATP-binding proteins (YclP), two transmembrane proteins (YclN and YclO) and a solute-binding protein (YclQ).

The protein resides in the cell membrane. Part of the ABC transporter complex YclNOPQ involved in uptake of ferric-petrobactin. Petrobactin is a photoreactive 3,4-catecholate siderophore produced by many members of the B.cereus group, including B.anthracis. Probably responsible for the translocation of the substrate across the membrane. The chain is Petrobactin import system permease protein YclO (yclO) from Bacillus subtilis (strain 168).